We begin with the raw amino-acid sequence, 170 residues long: Phosphopantetheine adenylyltransferase (170 aa).

Thr-18 contacts substrate. ATP-binding positions include 18–19 and His-26; that span reads TF. Substrate is bound by residues Lys-50, Leu-84, and Arg-98. ATP is bound by residues 99–101, Glu-109, and 134–140; these read GLR and WIYISSS.

This sequence belongs to the bacterial CoaD family. In terms of assembly, homohexamer. Mg(2+) is required as a cofactor.

It is found in the cytoplasm. The enzyme catalyses (R)-4'-phosphopantetheine + ATP + H(+) = 3'-dephospho-CoA + diphosphate. The protein operates within cofactor biosynthesis; coenzyme A biosynthesis; CoA from (R)-pantothenate: step 4/5. Reversibly transfers an adenylyl group from ATP to 4'-phosphopantetheine, yielding dephospho-CoA (dPCoA) and pyrophosphate. This Desulfotalea psychrophila (strain LSv54 / DSM 12343) protein is Phosphopantetheine adenylyltransferase.